Consider the following 238-residue polypeptide: Probable transcriptional regulatory protein IL0164 (238 aa).

This sequence belongs to the TACO1 family.

It localises to the cytoplasm. In Idiomarina loihiensis (strain ATCC BAA-735 / DSM 15497 / L2-TR), this protein is Probable transcriptional regulatory protein IL0164.